The following is a 977-amino-acid chain: MERQKRKADIEKGLQFIQSTLPLKQEEYEAFLLKLVQNLFAEGNDLFREKDYKQALVQYMEGLNVADYAASDQVALPRELLCKLHVNRAACYFTMGLYEKALEDSEKALGLDSESIRALFRKARALNELGRHKEAYECSSRCSLALPHDESVTQLGQELAQKLGLRVRKAYKRPQELETFSLLSNGTAAGVADQGTSNGLGSIDDIETDCYVDPRGSPALLPSTPTMPLFPHVLDLLAPLDSSRTLPSTDSLDDFSDGDVFGPELDTLLDSLSLVQGGLSGSGVPSELPQLIPVFPGGTPLLPPVVGGSIPVSSPLPPASFGLVMDPSKKLAASVLDALDPPGPTLDPLDLLPYSETRLDALDSFGSTRGSLDKPDSFMEETNSQDHRPPSGAQKPAPSPEPCMPNTALLIKNPLAATHEFKQACQLCYPKTGPRAGDYTYREGLEHKCKRDILLGRLRSSEDQTWKRIRPRPTKTSFVGSYYLCKDMINKQDCKYGDNCTFAYHQEEIDVWTEERKGTLNRDLLFDPLGGVKRGSLTIAKLLKEHQGIFTFLCEICFDSKPRIISKGTKDSPSVCSNLAAKHSFYNNKCLVHIVRSTSLKYSKIRQFQEHFQFDVCRHEVRYGCLREDSCHFAHSFIELKVWLLQQYSGMTHEDIVQESKKYWQQMEAHAGKASSSMGAPRTHGPSTFDLQMKFVCGQCWRNGQVVEPDKDLKYCSAKARHCWTKERRVLLVMSKAKRKWVSVRPLPSIRNFPQQYDLCIHAQNGRKCQYVGNCSFAHSPEERDMWTFMKENKILDMQQTYDMWLKKHNPGKPGEGTPISSREGEKQIQMPTDYADIMMGYHCWLCGKNSNSKKQWQQHIQSEKHKEKVFTSDSDASGWAFRFPMGEFRLCDRLQKGKACPDGDKCRCAHGQEELNEWLDRREVLKQKLAKARKDMLLCPRDDDFGKYNFLLQEDGDLAGATPEAPAAAATATTGE.

TPR repeat units lie at residues 1-27, 36-69, and 82-115; these read MERQ…KQEE, VQNL…ADYA, and CKLH…DSES. Serine 217 bears the Phosphoserine mark. An LD motif; interaction with NSP3 motif is present at residues 248–256; sequence STDSLDDFS. Serine 364 and serine 367 each carry phosphoserine. Residues 365–403 are disordered; that stretch reads FGSTRGSLDKPDSFMEETNSQDHRPPSGAQKPAPSPEPC. C3H1-type zinc fingers lie at residues 484–508, 616–638, and 754–782; these read LCKD…HQEE, VCRH…HSFI, and PQQY…HSPE. The segment at 842 to 866 adopts a C2H2-type zinc-finger fold; sequence YHCWLCGKNSNSKKQWQQHIQSEKH. The segment at 886–914 adopts a C3H1-type 4 zinc-finger fold; sequence MGEFRLCDRLQKGKACPDGDKCRCAHGQE.

In terms of assembly, (Microbial infection) Interacts (via LD motif) with rotavirus A NSP3 (via the coiled-coil region).

Its subcellular location is the nucleus. May be a specific regulator of miRNA biogenesis. Binds to microRNAs MIR7-1, MIR16-2 and MIR29A hairpins recognizing the 'ATA(A/T)' motif in the apical loop. The protein is Zinc finger CCCH domain-containing protein 7B (ZC3H7B) of Homo sapiens (Human).